The primary structure comprises 146 residues: Hemoglobin cathodic subunit beta (146 aa).

In terms of domain architecture, Globin spans 2–146 (HFSDAERDAI…VAAALSSRYF (145 aa)). Positions 63 and 92 each coordinate heme b.

Belongs to the globin family. In terms of assembly, heterotetramer of two alpha chains and two beta chains. Red blood cells.

In terms of biological role, involved in oxygen transport from gills to the various peripheral tissues. The polypeptide is Hemoglobin cathodic subunit beta (hbb) (Hoplosternum littorale (Hassar)).